We begin with the raw amino-acid sequence, 150 residues long: Deoxyuridine 5'-triphosphate nucleotidohydrolase (150 aa).

Residues 69 to 71, Asn82, 86 to 88, and Lys96 contribute to the substrate site; these read RSG and TID.

Belongs to the dUTPase family. Requires Mg(2+) as cofactor.

It carries out the reaction dUTP + H2O = dUMP + diphosphate + H(+). The protein operates within pyrimidine metabolism; dUMP biosynthesis; dUMP from dCTP (dUTP route): step 2/2. This enzyme is involved in nucleotide metabolism: it produces dUMP, the immediate precursor of thymidine nucleotides and it decreases the intracellular concentration of dUTP so that uracil cannot be incorporated into DNA. In Aquifex aeolicus (strain VF5), this protein is Deoxyuridine 5'-triphosphate nucleotidohydrolase.